The chain runs to 218 residues: Small ribosomal subunit protein uS3c (218 aa).

Residues 47–118 (VQKNMRTSSG…KLNIAVTRIA (72 aa)) enclose the KH type-2 domain.

This sequence belongs to the universal ribosomal protein uS3 family. Part of the 30S ribosomal subunit.

The protein localises to the plastid. The protein resides in the chloroplast. This Atropa belladonna (Belladonna) protein is Small ribosomal subunit protein uS3c (rps3).